Reading from the N-terminus, the 409-residue chain is Elongation factor Tu (409 aa).

In terms of domain architecture, tr-type G spans 10–214 (KPHVNIGTIG…AVDSYIPDPE (205 aa)). Positions 19-26 (GHVDHGKT) are G1. Residue 19–26 (GHVDHGKT) coordinates GTP. Thr26 is a Mg(2+) binding site. The G2 stretch occupies residues 60–64 (GITIN). The interval 81–84 (DCPG) is G3. GTP-binding positions include 81-85 (DCPGH) and 136-139 (NKED). Residues 136-139 (NKED) are G4. Residues 174–176 (SGL) form a G5 region.

In terms of assembly, monomer.

Its subcellular location is the cytoplasm. It catalyses the reaction GTP + H2O = GDP + phosphate + H(+). Functionally, GTP hydrolase that promotes the GTP-dependent binding of aminoacyl-tRNA to the A-site of ribosomes during protein biosynthesis. This is Elongation factor Tu from Nostoc sp. (strain PCC 7120 / SAG 25.82 / UTEX 2576).